Consider the following 450-residue polypeptide: Glutamate--tRNA ligase 2 (450 aa).

Positions 10 to 20 (PSPTGFLHIGG) match the 'HIGH' region motif. The 'KMSKS' region motif lies at 232-236 (KLSKR). Lysine 235 is a binding site for ATP.

Belongs to the class-I aminoacyl-tRNA synthetase family. Glutamate--tRNA ligase type 1 subfamily. Monomer.

It localises to the cytoplasm. The enzyme catalyses tRNA(Glu) + L-glutamate + ATP = L-glutamyl-tRNA(Glu) + AMP + diphosphate. Functionally, catalyzes the attachment of glutamate to tRNA(Glu) in a two-step reaction: glutamate is first activated by ATP to form Glu-AMP and then transferred to the acceptor end of tRNA(Glu). This is Glutamate--tRNA ligase 2 from Wolbachia pipientis subsp. Culex pipiens (strain wPip).